We begin with the raw amino-acid sequence, 254 residues long: Decaprenylphosphoryl-2-keto-beta-D-erythro-pentose reductase (254 aa).

NAD(+) is bound at residue Asp67. Catalysis depends on Tyr160, which acts as the Proton acceptor. NAD(+) is bound at residue Lys164.

Belongs to the short-chain dehydrogenases/reductases (SDR) family. As to quaternary structure, interacts with DprE1 to form an epimerase complex.

It localises to the periplasm. The catalysed reaction is trans,octa-cis-decaprenylphospho-beta-D-arabinofuranose + NAD(+) = trans,octa-cis-decaprenylphospho-beta-D-erythro-pentofuranosid-2-ulose + NADH + H(+). The protein operates within cell wall biogenesis; cell wall polysaccharide biosynthesis. Component of the DprE1-DprE2 complex that catalyzes the 2-step epimerization of decaprenyl-phospho-ribose (DPR) to decaprenyl-phospho-arabinose (DPA), a key precursor that serves as the arabinose donor required for the synthesis of cell-wall arabinans. DprE1 catalyzes the first step of epimerization, namely FAD-dependent oxidation of the C2' hydroxyl of DPR to yield the keto intermediate decaprenyl-phospho-2'-keto-D-arabinose (DPX). The intermediate DPX is then transferred to DprE2 subunit of the epimerase complex, most probably through a 'substrate channel' at the interface of DprE1-DprE2 complex. DprE2 then catalyzes the second step of epimerization, the NAD(+)-dependent reduction of DPX that leads to the formation of DPA. This Mycobacterium bovis (strain ATCC BAA-935 / AF2122/97) protein is Decaprenylphosphoryl-2-keto-beta-D-erythro-pentose reductase.